Consider the following 365-residue polypeptide: Caffeic acid 3-O-methyltransferase (365 aa).

Position 131 (Asn131) interacts with (E)-ferulate. S-adenosyl-L-homocysteine-binding residues include Gly208, Asp231, Asp251, Met252, Met264, and Lys265. Residue His269 is the Proton acceptor of the active site. Position 270 (Asp270) interacts with (E)-5-hydroxyferulate. Residues Glu297 and Glu329 contribute to the active site.

Belongs to the class I-like SAM-binding methyltransferase superfamily. Cation-independent O-methyltransferase family. COMT subfamily. Homodimer. In terms of tissue distribution, more abundant in roots and stems.

The enzyme catalyses (E)-caffeate + S-adenosyl-L-methionine = (E)-ferulate + S-adenosyl-L-homocysteine + H(+). It carries out the reaction (E)-5-hydroxyferulate + S-adenosyl-L-methionine = (E)-sinapate + S-adenosyl-L-homocysteine + H(+). It participates in aromatic compound metabolism; phenylpropanoid biosynthesis. Catalyzes the conversion of caffeic acid to ferulic acid and of 5-hydroxyferulic acid to sinapic acid. The resulting products may subsequently be converted to the corresponding alcohols that are incorporated into lignins. This is Caffeic acid 3-O-methyltransferase from Medicago sativa (Alfalfa).